A 637-amino-acid polypeptide reads, in one-letter code: Sodium-dependent nutrient amino acid transporter 1 (637 aa).

Positions methionine 1–histidine 17 are enriched in polar residues. A disordered region spans residues methionine 1–arginine 39. The Cytoplasmic segment spans residues methionine 1–glutamate 47. A compositionally biased stretch (basic and acidic residues) spans aspartate 26 to arginine 39. Helical transmembrane passes span phenylalanine 48 to threonine 68, glycine 75 to leucine 95, and threonine 128 to valine 148. N-linked (GlcNAc...) asparagine glycans are attached at residues asparagine 181 and asparagine 195. The next 9 membrane-spanning stretches (helical) occupy residues proline 225–methionine 245, alanine 254–valine 274, alanine 303–serine 323, isoleucine 337–leucine 357, leucine 397–leucine 417, isoleucine 443–leucine 463, threonine 470–leucine 490, phenylalanine 515–isoleucine 535, and alanine 549–isoleucine 569.

Belongs to the sodium:neurotransmitter symporter (SNF) (TC 2.A.22) family.

The protein localises to the membrane. Its function is as follows. Unusual broad substrate spectrum amino acid:sodium cotransporter that promotes absorption of the D isomers of essential amino acids. Neutral amino acids are the preferred substrates, especially methionine and phenylalanine. The sequence is that of Sodium-dependent nutrient amino acid transporter 1 from Drosophila virilis (Fruit fly).